The following is a 268-amino-acid chain: MRRIDSCFAELRANGRKALIPFITAGDPSLEATVPVMHALVRAGADVIELGVPFSDPMADGPTIQRSSERALARGAGLAYVLEAVHEFRREDATTPVVLMGYLNPIEIHGTRRFAEAAVAAGVDGVLLVDLPPEEAGETRTIFTEVGLALIALASPTTSEQRLDMLCSTAQGYLYYVSFAGVTGASNLLDTHAASDRLRQLRRRAGAPVVAGFGIKDAASAAAMAVDADGVVVGSALVAALAEVNDVRSARERAEAFLAPLRQALDQG.

Catalysis depends on proton acceptor residues glutamate 49 and aspartate 60.

This sequence belongs to the TrpA family. In terms of assembly, tetramer of two alpha and two beta chains.

The enzyme catalyses (1S,2R)-1-C-(indol-3-yl)glycerol 3-phosphate + L-serine = D-glyceraldehyde 3-phosphate + L-tryptophan + H2O. It functions in the pathway amino-acid biosynthesis; L-tryptophan biosynthesis; L-tryptophan from chorismate: step 5/5. The alpha subunit is responsible for the aldol cleavage of indoleglycerol phosphate to indole and glyceraldehyde 3-phosphate. The sequence is that of Tryptophan synthase alpha chain from Xanthomonas axonopodis pv. citri (strain 306).